The sequence spans 257 residues: Acetylglutamate kinase (257 aa).

Substrate is bound by residues 43 to 44 (GG), R65, and N157. ATP-binding positions include 180-185 (DVSGIL) and 208-210 (IIT).

The protein belongs to the acetylglutamate kinase family. ArgB subfamily. Homodimer.

The protein resides in the cytoplasm. It catalyses the reaction N-acetyl-L-glutamate + ATP = N-acetyl-L-glutamyl 5-phosphate + ADP. Its pathway is amino-acid biosynthesis; L-arginine biosynthesis; N(2)-acetyl-L-ornithine from L-glutamate: step 2/4. Catalyzes the ATP-dependent phosphorylation of N-acetyl-L-glutamate. The protein is Acetylglutamate kinase of Enterobacter sp. (strain 638).